Consider the following 303-residue polypeptide: Methionine import ATP-binding protein MetN (303 aa).

The ABC transporter domain occupies 1–222 (MLDQISLEIP…PDPKMRHFLG (222 aa)). Position 19–26 (19–26 (GHSGAGKS)) interacts with ATP.

Belongs to the ABC transporter superfamily. Methionine importer (TC 3.A.1.24) family. As to quaternary structure, the complex is composed of two ATP-binding proteins (MetN), two transmembrane proteins (MetI) and a solute-binding protein (MetQ).

Its subcellular location is the cell inner membrane. It catalyses the reaction L-methionine(out) + ATP + H2O = L-methionine(in) + ADP + phosphate + H(+). The catalysed reaction is D-methionine(out) + ATP + H2O = D-methionine(in) + ADP + phosphate + H(+). Its function is as follows. Part of the ABC transporter complex MetNIQ involved in methionine import. Responsible for energy coupling to the transport system. The polypeptide is Methionine import ATP-binding protein MetN (Wolinella succinogenes (strain ATCC 29543 / DSM 1740 / CCUG 13145 / JCM 31913 / LMG 7466 / NCTC 11488 / FDC 602W) (Vibrio succinogenes)).